A 283-amino-acid polypeptide reads, in one-letter code: Protein/nucleic acid deglycase HchA (283 aa).

The Zn(2+) site is built by His86, Glu91, and His123. Cys185 acts as the Nucleophile in catalysis.

The protein belongs to the peptidase C56 family. HchA subfamily. Homodimer.

The protein localises to the cytoplasm. It catalyses the reaction N(omega)-(1-hydroxy-2-oxopropyl)-L-arginyl-[protein] + H2O = lactate + L-arginyl-[protein] + H(+). The enzyme catalyses N(6)-(1-hydroxy-2-oxopropyl)-L-lysyl-[protein] + H2O = lactate + L-lysyl-[protein] + H(+). The catalysed reaction is S-(1-hydroxy-2-oxopropyl)-L-cysteinyl-[protein] + H2O = lactate + L-cysteinyl-[protein] + H(+). It carries out the reaction N(omega)-(1-hydroxy-2-oxoethyl)-L-arginyl-[protein] + H2O = L-arginyl-[protein] + glycolate + H(+). It catalyses the reaction N(6)-(1-hydroxy-2-oxoethyl)-L-lysyl-[protein] + H2O = glycolate + L-lysyl-[protein] + H(+). The enzyme catalyses S-(1-hydroxy-2-oxoethyl)-L-cysteinyl-[protein] + H2O = glycolate + L-cysteinyl-[protein] + H(+). The catalysed reaction is N(2)-(1-hydroxy-2-oxopropyl)-dGTP + H2O = lactate + dGTP + H(+). It carries out the reaction N(2)-(1-hydroxy-2-oxopropyl)-GTP + H2O = lactate + GTP + H(+). It catalyses the reaction N(2)-(1-hydroxy-2-oxopropyl)-GDP + H2O = lactate + GDP + H(+). The enzyme catalyses N(2)-(1-hydroxy-2-oxopropyl)-GMP + H2O = lactate + GMP + H(+). The catalysed reaction is N(2)-(1-hydroxy-2-oxoethyl)-dGTP + H2O = dGTP + glycolate + H(+). It carries out the reaction N(2)-(1-hydroxy-2-oxoethyl)-GTP + H2O = glycolate + GTP + H(+). It catalyses the reaction N(2)-(1-hydroxy-2-oxoethyl)-GDP + H2O = glycolate + GDP + H(+). The enzyme catalyses N(2)-(1-hydroxy-2-oxoethyl)-GMP + H2O = glycolate + GMP + H(+). The catalysed reaction is an N(2)-(1-hydroxy-2-oxopropyl)-guanosine in RNA + H2O = a guanosine in RNA + lactate + H(+). It carries out the reaction an N(2)-(1-hydroxy-2-oxopropyl)-2'-deoxyguanosine in DNA + H2O = a 2'-deoxyguanosine in DNA + lactate + H(+). It catalyses the reaction an N(2)-(1-hydroxy-2-oxoethyl)-guanosine in RNA + H2O = a guanosine in RNA + glycolate + H(+). The enzyme catalyses an N(2)-(1-hydroxy-2-oxoethyl)-2'-deoxyguanosine in DNA + H2O = a 2'-deoxyguanosine in DNA + glycolate + H(+). Functionally, protein and nucleotide deglycase that catalyzes the deglycation of the Maillard adducts formed between amino groups of proteins or nucleotides and reactive carbonyl groups of glyoxals. Thus, functions as a protein deglycase that repairs methylglyoxal- and glyoxal-glycated proteins, and releases repaired proteins and lactate or glycolate, respectively. Deglycates cysteine, arginine and lysine residues in proteins, and thus reactivates these proteins by reversing glycation by glyoxals. Acts on early glycation intermediates (hemithioacetals and aminocarbinols), preventing the formation of Schiff bases and advanced glycation endproducts (AGE). Also functions as a nucleotide deglycase able to repair glycated guanine in the free nucleotide pool (GTP, GDP, GMP, dGTP) and in DNA and RNA. Is thus involved in a major nucleotide repair system named guanine glycation repair (GG repair), dedicated to reversing methylglyoxal and glyoxal damage via nucleotide sanitization and direct nucleic acid repair. Plays an important role in protecting cells from carbonyl stress. This Escherichia coli (strain 55989 / EAEC) protein is Protein/nucleic acid deglycase HchA.